Reading from the N-terminus, the 440-residue chain is tRNA(Ile)-lysidine synthase (440 aa).

25-30 is a binding site for ATP; sequence SGGVDS.

Belongs to the tRNA(Ile)-lysidine synthase family.

It localises to the cytoplasm. It carries out the reaction cytidine(34) in tRNA(Ile2) + L-lysine + ATP = lysidine(34) in tRNA(Ile2) + AMP + diphosphate + H(+). In terms of biological role, ligates lysine onto the cytidine present at position 34 of the AUA codon-specific tRNA(Ile) that contains the anticodon CAU, in an ATP-dependent manner. Cytidine is converted to lysidine, thus changing the amino acid specificity of the tRNA from methionine to isoleucine. This is tRNA(Ile)-lysidine synthase from Vibrio cholerae serotype O1 (strain ATCC 39541 / Classical Ogawa 395 / O395).